The following is a 345-amino-acid chain: Protein TRIGALACTOSYLDIACYLGLYCEROL 3, chloroplastic (345 aa).

Residues 1-46 (MLSLSCSSSSSSLLPPSLHYHGSSSVQSIVVPRRSLISFRRKVSCC) constitute a chloroplast transit peptide. The region spanning 85–336 (IECRDVYKSF…TNPIVQQFAT (252 aa)) is the ABC transporter domain. Position 117 to 124 (117 to 124 (GPSGTGKS)) interacts with ATP.

It belongs to the ABC transporter superfamily. ABCI family. In terms of assembly, catalytic subunit of the TGD complex, a lipid translocator at the inner chloroplast envelope membrane made of TGD1, TGD2 and TGD3. Interacts with TGD1 and TGD2 with an overall subunit stoichiometry of 2 TGD1, 2 TGD3 and 8 to 12 TGD2. Interacts with TGD5.

It is found in the plastid. The protein resides in the chloroplast stroma. In terms of biological role, ATPase transporter involved in lipid transfer from the endoplasmic reticulum (ER) to plastids, and necessary for thylakoids formation. Not involved in transition metal transport pathways. The sequence is that of Protein TRIGALACTOSYLDIACYLGLYCEROL 3, chloroplastic from Arabidopsis thaliana (Mouse-ear cress).